Consider the following 224-residue polypeptide: MATDIARLIDHTLLKADATKEQILQLCKEAQTYQFASVCINPYWVKLAAEQLKEDKHVAVCTVIGFPLGQSTPETKAFETKNAIANGATEVDMVINIAALKDKQDQMVLNDIRAVVDAAKDKALTKVILETCLLTNEEKERACALAVQAGADYVKTSTGFSTGGATVEDIALMRRVVGADVGVKASGGIRDLAAVNAMVEAGATRIGASAGVAIVTGATGSSGY.

Asp92 (proton donor/acceptor) is an active-site residue. Residue Lys155 is the Schiff-base intermediate with acetaldehyde of the active site. Lys184 (proton donor/acceptor) is an active-site residue.

Belongs to the DeoC/FbaB aldolase family. DeoC type 1 subfamily.

It localises to the cytoplasm. It carries out the reaction 2-deoxy-D-ribose 5-phosphate = D-glyceraldehyde 3-phosphate + acetaldehyde. It participates in carbohydrate degradation; 2-deoxy-D-ribose 1-phosphate degradation; D-glyceraldehyde 3-phosphate and acetaldehyde from 2-deoxy-alpha-D-ribose 1-phosphate: step 2/2. Its function is as follows. Catalyzes a reversible aldol reaction between acetaldehyde and D-glyceraldehyde 3-phosphate to generate 2-deoxy-D-ribose 5-phosphate. The sequence is that of Deoxyribose-phosphate aldolase from Shouchella clausii (strain KSM-K16) (Alkalihalobacillus clausii).